A 294-amino-acid chain; its full sequence is ATP synthase gamma chain (294 aa).

This sequence belongs to the ATPase gamma chain family. F-type ATPases have 2 components, CF(1) - the catalytic core - and CF(0) - the membrane proton channel. CF(1) has five subunits: alpha(3), beta(3), gamma(1), delta(1), epsilon(1). CF(0) has three main subunits: a, b and c.

Its subcellular location is the cell inner membrane. Functionally, produces ATP from ADP in the presence of a proton gradient across the membrane. The gamma chain is believed to be important in regulating ATPase activity and the flow of protons through the CF(0) complex. The chain is ATP synthase gamma chain from Paramagnetospirillum magneticum (strain ATCC 700264 / AMB-1) (Magnetospirillum magneticum).